The primary structure comprises 541 residues: Protein wntless homolog (541 aa).

Over 1 to 15 (MAGAIIENMSTKKLC) the chain is Cytoplasmic. A helical transmembrane segment spans residues 16–36 (IVGGILLVFQIVAFLVGGLIA). Residues 37 to 232 (PAPTTAVPYT…GIHQNGGFTK (196 aa)) lie on the Lumenal side of the membrane. Residues 101 to 232 (MEMSPWFQFM…GIHQNGGFTK (132 aa)) form an interaction with Wnt proteins region. A helical membrane pass occupies residues 233 to 253 (VWFAMKTFLTPSIFIIMVWYW). At 254–268 (RRITMMSRPPVLLEK) the chain is on the cytoplasmic side. The helical transmembrane segment at 269–289 (VIFALGISMTFINIPVEWFSI) threads the bilayer. At 290–303 (GFDWTWMLLFGDIR) the chain is on the lumenal side. A helical membrane pass occupies residues 304–324 (QGIFYAMLLSFWIIFCGEHMM). Over 325 to 331 (DQHERNH) the chain is Cytoplasmic. A helical transmembrane segment spans residues 332-352 (IAGYWKQVGPIAVGSFCLFIF). The Lumenal portion of the chain corresponds to 353–380 (DMCERGVQLTNPFYSIWTTDVGTELAMA). A helical membrane pass occupies residues 381 to 401 (FIIVAGICLCLYFLFLCFMVF). The Cytoplasmic portion of the chain corresponds to 402 to 431 (QVFRNISGKQSSLPAMSKVRRLHYEGLIFR). A helical transmembrane segment spans residues 432–452 (FKFLMLITLACAAMTVIFFIV). Residues 453 to 471 (SQVSEGHWKWGGVTVQVSS) are Lumenal-facing. The chain crosses the membrane as a helical span at residues 472 to 492 (AFFTGIYGMWNLYVFALMFLY). Residues 493 to 541 (APSHKNYGEDQSNGDLGVHSGEELQLTTTITHVDGPTEIYKLTRKEAQE) are Cytoplasmic-facing.

Belongs to the wntless family. Interacts with WNT3A. Interacts with WNT1, WNT3 and WNT5. N-glycosylated. As to expression, expressed in the brain, skeletal muscle, heart muscle, lung, gut, liver, and kidney (at protein level). In the brain, expressed in the cortex, striatum, hippocampus and to a lesser extent in the cerebellum (at protein level). Expressed in kidney, lung, skin, intestine, brain, spinal cord, skeleton, eyes, excretion glands, tooth and palatal shelves. In the cerebellum, expressed in Purkinje cells.

It is found in the golgi apparatus membrane. Its subcellular location is the cytoplasmic vesicle membrane. It localises to the cell membrane. The protein localises to the endoplasmic reticulum membrane. The protein resides in the early endosome membrane. Its function is as follows. Regulates Wnt proteins sorting and secretion in a feedback regulatory mechanism. This reciprocal interaction plays a key role in the regulation of expression, subcellular location, binding and organelle-specific association of Wnt proteins. Also plays an important role in establishment of the anterior-posterior body axis formation during development. This is Protein wntless homolog (Wls) from Mus musculus (Mouse).